The chain runs to 514 residues: 1-pyrroline-5-carboxylate dehydrogenase (514 aa).

Catalysis depends on residues glutamate 286 and cysteine 320.

It belongs to the aldehyde dehydrogenase family. RocA subfamily.

The enzyme catalyses L-glutamate 5-semialdehyde + NAD(+) + H2O = L-glutamate + NADH + 2 H(+). The protein operates within amino-acid degradation; L-proline degradation into L-glutamate; L-glutamate from L-proline: step 2/2. The polypeptide is 1-pyrroline-5-carboxylate dehydrogenase (Staphylococcus saprophyticus subsp. saprophyticus (strain ATCC 15305 / DSM 20229 / NCIMB 8711 / NCTC 7292 / S-41)).